The following is a 76-amino-acid chain: Accessory gland-specific peptide 57Dc (76 aa).

The signal sequence occupies residues 1–20 (MHGTHFLILLLLCGVLGSNG).

Post-translationally, cAMP-dependent phosphorylation. As to expression, lumen fluid of male accessory glands, becomes seminal fluid.

The protein resides in the secreted. Functionally, transferred from male to female during mating and may affect egglaying and behavior after mating. This is Accessory gland-specific peptide 57Dc (Mst57Dc) from Drosophila melanogaster (Fruit fly).